The chain runs to 625 residues: Phosphomethylpyrimidine synthase (625 aa).

Substrate contacts are provided by residues Asn-230, Met-259, Tyr-288, His-324, 344-346, 385-388, and Glu-424; these read SRG and DGLR. His-428 contacts Zn(2+). Residue Tyr-451 coordinates substrate. A Zn(2+)-binding site is contributed by His-492. The [4Fe-4S] cluster site is built by Cys-572, Cys-575, and Cys-580.

The protein belongs to the ThiC family. In terms of assembly, homodimer. It depends on [4Fe-4S] cluster as a cofactor.

The enzyme catalyses 5-amino-1-(5-phospho-beta-D-ribosyl)imidazole + S-adenosyl-L-methionine = 4-amino-2-methyl-5-(phosphooxymethyl)pyrimidine + CO + 5'-deoxyadenosine + formate + L-methionine + 3 H(+). The protein operates within cofactor biosynthesis; thiamine diphosphate biosynthesis. In terms of biological role, catalyzes the synthesis of the hydroxymethylpyrimidine phosphate (HMP-P) moiety of thiamine from aminoimidazole ribotide (AIR) in a radical S-adenosyl-L-methionine (SAM)-dependent reaction. The sequence is that of Phosphomethylpyrimidine synthase from Xanthomonas oryzae pv. oryzae (strain MAFF 311018).